A 40-amino-acid chain; its full sequence is Photosystem II reaction center protein Y (40 aa).

The chain crosses the membrane as a helical span at residues 5–23 (LVLVASPILLALGWAGFNI).

This sequence belongs to the PsbY family. In terms of assembly, PSII is composed of 1 copy each of membrane proteins PsbA, PsbB, PsbC, PsbD, PsbE, PsbF, PsbH, PsbI, PsbJ, PsbK, PsbL, PsbM, PsbT, PsbX, PsbY, PsbZ, Psb30/Ycf12, peripheral proteins PsbO, CyanoQ (PsbQ), PsbU, PsbV and a large number of cofactors. It forms dimeric complexes.

It localises to the cellular thylakoid membrane. Functionally, loosely associated component of the core of photosystem II (PSII), it is not always seen in crystals. PSII is a light-driven water plastoquinone oxidoreductase, using light energy to abstract electrons from H(2)O, generating a proton gradient subsequently used for ATP formation. The chain is Photosystem II reaction center protein Y from Synechococcus sp. (strain WH7803).